Reading from the N-terminus, the 155-residue chain is Fibroblast growth factor 1 (155 aa).

Residues 1–15 (MAEGEITTFTALTER) constitute a propeptide that is removed on maturation. Position 33 (Asn-33) interacts with heparin. The heparin-binding stretch occupies residues 127–143 (KKNGNSKLGPRTHYGQK).

The protein belongs to the heparin-binding growth factors family.

Its subcellular location is the secreted. It localises to the cytoplasm. It is found in the cell cortex. The protein localises to the cytosol. The protein resides in the nucleus. Plays an important role in the regulation of cell survival, cell division, angiogenesis, cell differentiation and cell migration. Functions as a potent mitogen in vitro. Acts as a ligand for FGFR1 and integrins. Binds to FGFR1 in the presence of heparin leading to FGFR1 dimerization and activation via sequential autophosphorylation on tyrosine residues which act as docking sites for interacting proteins, leading to the activation of several signaling cascades. Binds to integrins. Its binding to integrins and subsequent ternary complex formation with integrins and FGFR1 are essential for FGF1 signaling. This Gallus gallus (Chicken) protein is Fibroblast growth factor 1 (FGF1).